The chain runs to 629 residues: Aspartate--tRNA(Asp/Asn) ligase (629 aa).

A disordered region spans residues 1-24; it reads MERSSRADLISEDSHPARTHTCGD. The span at 12 to 24 shows a compositional bias: basic and acidic residues; the sequence is EDSHPARTHTCGD. Glu-194 is a binding site for L-aspartate. The tract at residues 218–221 is aspartate; the sequence is QTYK. Position 240 (Arg-240) interacts with L-aspartate. ATP is bound by residues 240-242 and Gln-249; that span reads RDE. His-474 contributes to the L-aspartate binding site. Glu-508 lines the ATP pocket. Arg-515 contributes to the L-aspartate binding site. Residue 560–563 coordinates ATP; it reads GLDR.

The protein belongs to the class-II aminoacyl-tRNA synthetase family. Type 1 subfamily. In terms of assembly, homodimer.

The protein resides in the cytoplasm. The catalysed reaction is tRNA(Asx) + L-aspartate + ATP = L-aspartyl-tRNA(Asx) + AMP + diphosphate. Its function is as follows. Aspartyl-tRNA synthetase with relaxed tRNA specificity since it is able to aspartylate not only its cognate tRNA(Asp) but also tRNA(Asn). Reaction proceeds in two steps: L-aspartate is first activated by ATP to form Asp-AMP and then transferred to the acceptor end of tRNA(Asp/Asn). This is Aspartate--tRNA(Asp/Asn) ligase from Salinibacter ruber (strain DSM 13855 / M31).